Reading from the N-terminus, the 694-residue chain is Polyribonucleotide nucleotidyltransferase (694 aa).

Mg(2+) is bound by residues D485 and D491. The region spanning 552–611 (PRIETMQIKPNKIATVIGPGGKQIRQIIEEAGVQIDINDSGLVSISASSPQAIEKAKSMI) is the KH domain. An S1 motif domain is found at 621–689 (GKIYEGRVTS…EKGQYKLSHK (69 aa)).

The protein belongs to the polyribonucleotide nucleotidyltransferase family. Requires Mg(2+) as cofactor.

It localises to the cytoplasm. It catalyses the reaction RNA(n+1) + phosphate = RNA(n) + a ribonucleoside 5'-diphosphate. In terms of biological role, involved in mRNA degradation. Catalyzes the phosphorolysis of single-stranded polyribonucleotides processively in the 3'- to 5'-direction. This Chlamydia caviae (strain ATCC VR-813 / DSM 19441 / 03DC25 / GPIC) (Chlamydophila caviae) protein is Polyribonucleotide nucleotidyltransferase.